A 599-amino-acid polypeptide reads, in one-letter code: Elongation factor 4 (599 aa).

The 183-residue stretch at 2-184 (KNIRNFSIIA…RLVRDIPPPE (183 aa)) folds into the tr-type G domain. GTP contacts are provided by residues 14–19 (DHGKST) and 131–134 (NKID).

Belongs to the TRAFAC class translation factor GTPase superfamily. Classic translation factor GTPase family. LepA subfamily.

It localises to the cell inner membrane. The enzyme catalyses GTP + H2O = GDP + phosphate + H(+). Functionally, required for accurate and efficient protein synthesis under certain stress conditions. May act as a fidelity factor of the translation reaction, by catalyzing a one-codon backward translocation of tRNAs on improperly translocated ribosomes. Back-translocation proceeds from a post-translocation (POST) complex to a pre-translocation (PRE) complex, thus giving elongation factor G a second chance to translocate the tRNAs correctly. Binds to ribosomes in a GTP-dependent manner. The protein is Elongation factor 4 of Klebsiella pneumoniae (strain 342).